The sequence spans 164 residues: NAD(P)H-quinone oxidoreductase subunit I, chloroplastic (164 aa).

4Fe-4S ferredoxin-type domains are found at residues 55–84 (GRIHFEFDKCIACEVCVRVCPIDLPVVDWK) and 95–124 (LNYSIDFGICIFCGNCVEYCPTNCLSMTEE). [4Fe-4S] cluster-binding residues include C64, C67, C70, C74, C104, C107, C110, and C114.

The protein belongs to the complex I 23 kDa subunit family. NDH is composed of at least 16 different subunits, 5 of which are encoded in the nucleus. The cofactor is [4Fe-4S] cluster.

The protein localises to the plastid. The protein resides in the chloroplast thylakoid membrane. It catalyses the reaction a plastoquinone + NADH + (n+1) H(+)(in) = a plastoquinol + NAD(+) + n H(+)(out). The enzyme catalyses a plastoquinone + NADPH + (n+1) H(+)(in) = a plastoquinol + NADP(+) + n H(+)(out). NDH shuttles electrons from NAD(P)H:plastoquinone, via FMN and iron-sulfur (Fe-S) centers, to quinones in the photosynthetic chain and possibly in a chloroplast respiratory chain. The immediate electron acceptor for the enzyme in this species is believed to be plastoquinone. Couples the redox reaction to proton translocation, and thus conserves the redox energy in a proton gradient. This Daucus carota (Wild carrot) protein is NAD(P)H-quinone oxidoreductase subunit I, chloroplastic.